Consider the following 530-residue polypeptide: Inactive ubiquitin carboxyl-terminal hydrolase 17-like protein 4 (530 aa).

Positions 80–375 (AGLQNMGNTC…QAYVLFYIQK (296 aa)) constitute a USP domain. Basic and acidic residues predominate over residues 382-392 (SESVSRGREPR). 2 disordered regions span residues 382 to 410 (SESVSRGREPRALGAEDTDRPATQGELKR) and 493 to 530 (NSTDQESMNTGTLASLQGRTRRSKGKNKHSKRSLLVCQ). The segment covering 495–510 (TDQESMNTGTLASLQG) has biased composition (polar residues). The segment covering 511 to 524 (RTRRSKGKNKHSKR) has biased composition (basic residues).

It belongs to the peptidase C19 family. USP17 subfamily.

The protein localises to the nucleus. It is found in the endoplasmic reticulum. The protein is Inactive ubiquitin carboxyl-terminal hydrolase 17-like protein 4 (USP17L4) of Homo sapiens (Human).